Reading from the N-terminus, the 638-residue chain is Phosphomethylpyrimidine synthase (638 aa).

Substrate is bound by residues asparagine 235, methionine 264, tyrosine 293, histidine 329, serine 349–glycine 351, aspartate 390–arginine 393, and glutamate 429. Zn(2+) is bound at residue histidine 433. Tyrosine 456 is a binding site for substrate. Zn(2+) is bound at residue histidine 497. The [4Fe-4S] cluster site is built by cysteine 577, cysteine 580, and cysteine 585.

The protein belongs to the ThiC family. Homodimer. [4Fe-4S] cluster serves as cofactor.

The catalysed reaction is 5-amino-1-(5-phospho-beta-D-ribosyl)imidazole + S-adenosyl-L-methionine = 4-amino-2-methyl-5-(phosphooxymethyl)pyrimidine + CO + 5'-deoxyadenosine + formate + L-methionine + 3 H(+). It functions in the pathway cofactor biosynthesis; thiamine diphosphate biosynthesis. In terms of biological role, catalyzes the synthesis of the hydroxymethylpyrimidine phosphate (HMP-P) moiety of thiamine from aminoimidazole ribotide (AIR) in a radical S-adenosyl-L-methionine (SAM)-dependent reaction. The chain is Phosphomethylpyrimidine synthase from Polaromonas naphthalenivorans (strain CJ2).